We begin with the raw amino-acid sequence, 222 residues long: Protein GrpE (222 aa).

Belongs to the GrpE family. Homodimer.

It localises to the cytoplasm. Functionally, participates actively in the response to hyperosmotic and heat shock by preventing the aggregation of stress-denatured proteins, in association with DnaK and GrpE. It is the nucleotide exchange factor for DnaK and may function as a thermosensor. Unfolded proteins bind initially to DnaJ; upon interaction with the DnaJ-bound protein, DnaK hydrolyzes its bound ATP, resulting in the formation of a stable complex. GrpE releases ADP from DnaK; ATP binding to DnaK triggers the release of the substrate protein, thus completing the reaction cycle. Several rounds of ATP-dependent interactions between DnaJ, DnaK and GrpE are required for fully efficient folding. The polypeptide is Protein GrpE (Bartonella bacilliformis (strain ATCC 35685 / KC583 / Herrer 020/F12,63)).